The primary structure comprises 491 residues: 2,3-bisphosphoglycerate-independent phosphoglycerate mutase (491 aa).

Residues Asp11 and Ser61 each coordinate Mn(2+). Ser61 functions as the Phosphoserine intermediate in the catalytic mechanism. Substrate-binding positions include His118, 147-148 (RD), Arg177, Arg183, 247-250 (RNDR), and Lys320. Asp386, His390, Asp427, His428, and His445 together coordinate Mn(2+).

This sequence belongs to the BPG-independent phosphoglycerate mutase family. In terms of assembly, monomer. It depends on Mn(2+) as a cofactor.

It carries out the reaction (2R)-2-phosphoglycerate = (2R)-3-phosphoglycerate. Its pathway is carbohydrate degradation; glycolysis; pyruvate from D-glyceraldehyde 3-phosphate: step 3/5. Catalyzes the interconversion of 2-phosphoglycerate and 3-phosphoglycerate. This chain is 2,3-bisphosphoglycerate-independent phosphoglycerate mutase, found in Helicobacter pylori (strain J99 / ATCC 700824) (Campylobacter pylori J99).